The primary structure comprises 391 residues: Casein kinase II subunit alpha (391 aa).

An interaction with beta subunit region spans residues 36-41 (QDDYQL). Positions 39 to 324 (YQLVRKLGRG…AREAMEHPYF (286 aa)) constitute a Protein kinase domain. Residues 45–53 (LGRGKYSEV) and K68 each bind ATP. The active-site Proton acceptor is D156. The span at 335–346 (GSSNMPGGSTPV) shows a compositional bias: polar residues. The tract at residues 335–363 (GSSNMPGGSTPVSSASMMSGISSVPTPSP) is disordered. A compositionally biased stretch (low complexity) spans 347 to 357 (SSASMMSGISS).

This sequence belongs to the protein kinase superfamily. Ser/Thr protein kinase family. CK2 subfamily. Tetramer composed of an alpha chain, an alpha' and two beta chains. Interacts with RNPS1.

The protein resides in the nucleus. It carries out the reaction L-seryl-[protein] + ATP = O-phospho-L-seryl-[protein] + ADP + H(+). It catalyses the reaction L-threonyl-[protein] + ATP = O-phospho-L-threonyl-[protein] + ADP + H(+). Functionally, catalytic subunit of a constitutively active serine/threonine-protein kinase complex that phosphorylates a large number of substrates containing acidic residues C-terminal to the phosphorylated serine or threonine. Regulates numerous cellular processes, such as cell cycle progression, apoptosis and transcription, as well as viral infection. May act as a regulatory node which integrates and coordinates numerous signals leading to an appropriate cellular response. During mitosis, functions as a component of the p53/TP53-dependent spindle assembly checkpoint (SAC) that maintains cyclin-B-CDK1 activity and G2 arrest in response to spindle damage. Can also negatively regulate apoptosis. Phosphorylates the caspases CASP9 and CASP2 and the apoptotic regulator NOL3. Phosphorylation protects CASP9 from cleavage and activation by CASP8, and inhibits the dimerization of CASP2 and activation of CASP8. Plays an important role in the circadian clock function by phosphorylating BMAL1. The chain is Casein kinase II subunit alpha (CSNK2A1) from Gallus gallus (Chicken).